A 406-amino-acid chain; its full sequence is Renin (406 aa).

An N-terminal signal peptide occupies residues 1 to 23 (MDGWRRMPRWGLLLLLWGSCTFG). The propeptide at 24–66 (LPTDTTTFKRIFLKRMPSIRESLKERGVDMARLGPEWSQPMKR) is activation peptide. N71 is a glycosylation site (N-linked (GlcNAc...) asparagine). The Peptidase A1 domain maps to 86–403 (YYGEIGIGTP…DRRNNRIGFA (318 aa)). Residue D104 is part of the active site. An intrachain disulfide couples C117 to C124. N141 carries an N-linked (GlcNAc...) asparagine glycan. C283 and C287 are oxidised to a cystine. D292 is a catalytic residue. C325 and C362 are joined by a disulfide.

The protein belongs to the peptidase A1 family. As to quaternary structure, interacts with ATP6AP2.

The protein resides in the secreted. Its subcellular location is the membrane. The enzyme catalyses Cleavage of Leu-|-Xaa bond in angiotensinogen to generate angiotensin I.. Its activity is regulated as follows. Interaction with ATP6AP2 results in a 5-fold increased efficiency in angiotensinogen processing. Its function is as follows. Renin is a highly specific endopeptidase, whose only known function is to generate angiotensin I from angiotensinogen in the plasma, initiating a cascade of reactions that produce an elevation of blood pressure and increased sodium retention by the kidney. This Macaca mulatta (Rhesus macaque) protein is Renin (REN).